The following is a 292-amino-acid chain: ATP synthase gamma chain (292 aa).

The protein belongs to the ATPase gamma chain family. F-type ATPases have 2 components, CF(1) - the catalytic core - and CF(0) - the membrane proton channel. CF(1) has five subunits: alpha(3), beta(3), gamma(1), delta(1), epsilon(1). CF(0) has three main subunits: a, b and c.

The protein resides in the cell inner membrane. In terms of biological role, produces ATP from ADP in the presence of a proton gradient across the membrane. The gamma chain is believed to be important in regulating ATPase activity and the flow of protons through the CF(0) complex. This Methylobacterium sp. (strain 4-46) protein is ATP synthase gamma chain.